The chain runs to 645 residues: Acetyl-coenzyme A synthetase (645 aa).

Residues 190-193 (RGGK) and threonine 308 each bind CoA. Residues 384–386 (GEP), 408–413 (DTWWQT), aspartate 497, and arginine 512 each bind ATP. Serine 520 lines the CoA pocket. Position 523 (arginine 523) interacts with ATP. 3 residues coordinate Mg(2+): valine 534, histidine 536, and isoleucine 539. Lysine 606 is modified (N6-acetyllysine).

It belongs to the ATP-dependent AMP-binding enzyme family. Mg(2+) serves as cofactor. Post-translationally, acetylated. Deacetylation by the SIR2-homolog deacetylase activates the enzyme.

It carries out the reaction acetate + ATP + CoA = acetyl-CoA + AMP + diphosphate. Its function is as follows. Catalyzes the conversion of acetate into acetyl-CoA (AcCoA), an essential intermediate at the junction of anabolic and catabolic pathways. AcsA undergoes a two-step reaction. In the first half reaction, AcsA combines acetate with ATP to form acetyl-adenylate (AcAMP) intermediate. In the second half reaction, it can then transfer the acetyl group from AcAMP to the sulfhydryl group of CoA, forming the product AcCoA. This chain is Acetyl-coenzyme A synthetase, found in Alcanivorax borkumensis (strain ATCC 700651 / DSM 11573 / NCIMB 13689 / SK2).